The primary structure comprises 61 residues: Large ribosomal subunit protein bL32 (61 aa).

The segment at 1–44 (MAVQQNRKSRSRRDMRRSHDALTENALTVDQTTGETHRRHHVTK) is disordered. The segment covering 7–16 (RKSRSRRDMR) has biased composition (basic residues). Residues 25–34 (NALTVDQTTG) show a composition bias toward polar residues.

It belongs to the bacterial ribosomal protein bL32 family.

This chain is Large ribosomal subunit protein bL32, found in Acinetobacter baylyi (strain ATCC 33305 / BD413 / ADP1).